A 127-amino-acid polypeptide reads, in one-letter code: uncharacterized protein (127 aa).

The first 16 residues, 1–16, serve as a signal peptide directing secretion; sequence MIKKIIFGIAILLSLS. C17 carries N-palmitoyl cysteine lipidation. The S-diacylglycerol cysteine moiety is linked to residue C17. Positions 56-101 form a coiled coil; the sequence is EVRKEIQEYRVEIVDINKKKRELYNSLSKEAQNFLAEQQKYKQKLS. Residues 101–127 are disordered; sequence SISKLPTEDDSPNNTANSKDNKDTDTK.

It localises to the cell membrane. This is an uncharacterized protein from Rickettsia felis (strain ATCC VR-1525 / URRWXCal2) (Rickettsia azadi).